The following is a 375-amino-acid chain: Queuine tRNA-ribosyltransferase (375 aa).

The Proton acceptor role is filled by D90. Substrate is bound by residues 90–94 (DSGGF), D144, Q193, and G220. The interval 251–257 (GVGTPED) is RNA binding. The active-site Nucleophile is D270. An RNA binding; important for wobble base 34 recognition region spans residues 275–279 (TRNAR). 4 residues coordinate Zn(2+): C308, C310, C313, and H339.

It belongs to the queuine tRNA-ribosyltransferase family. Homodimer. Within each dimer, one monomer is responsible for RNA recognition and catalysis, while the other monomer binds to the replacement base PreQ1. The cofactor is Zn(2+).

It catalyses the reaction 7-aminomethyl-7-carbaguanine + guanosine(34) in tRNA = 7-aminomethyl-7-carbaguanosine(34) in tRNA + guanine. It functions in the pathway tRNA modification; tRNA-queuosine biosynthesis. Its function is as follows. Catalyzes the base-exchange of a guanine (G) residue with the queuine precursor 7-aminomethyl-7-deazaguanine (PreQ1) at position 34 (anticodon wobble position) in tRNAs with GU(N) anticodons (tRNA-Asp, -Asn, -His and -Tyr). Catalysis occurs through a double-displacement mechanism. The nucleophile active site attacks the C1' of nucleotide 34 to detach the guanine base from the RNA, forming a covalent enzyme-RNA intermediate. The proton acceptor active site deprotonates the incoming PreQ1, allowing a nucleophilic attack on the C1' of the ribose to form the product. After dissociation, two additional enzymatic reactions on the tRNA convert PreQ1 to queuine (Q), resulting in the hypermodified nucleoside queuosine (7-(((4,5-cis-dihydroxy-2-cyclopenten-1-yl)amino)methyl)-7-deazaguanosine). In Janthinobacterium sp. (strain Marseille) (Minibacterium massiliensis), this protein is Queuine tRNA-ribosyltransferase.